A 155-amino-acid chain; its full sequence is Endoribonuclease YbeY (155 aa).

Positions 120, 124, and 130 each coordinate Zn(2+).

It belongs to the endoribonuclease YbeY family. Requires Zn(2+) as cofactor.

Its subcellular location is the cytoplasm. In terms of biological role, single strand-specific metallo-endoribonuclease involved in late-stage 70S ribosome quality control and in maturation of the 3' terminus of the 16S rRNA. In Alkaliphilus metalliredigens (strain QYMF), this protein is Endoribonuclease YbeY.